A 270-amino-acid polypeptide reads, in one-letter code: 4-hydroxy-tetrahydrodipicolinate reductase (270 aa).

NAD(+) contacts are provided by residues 11–16 (GASGRM) and E37. R38 contacts NADP(+). Residues 101–103 (GTT) and 125–128 (APNM) each bind NAD(+). Residue H158 is the Proton donor/acceptor of the active site. H159 is a binding site for (S)-2,3,4,5-tetrahydrodipicolinate. The active-site Proton donor is K162. Position 168-169 (168-169 (GT)) interacts with (S)-2,3,4,5-tetrahydrodipicolinate.

The protein belongs to the DapB family.

The protein localises to the cytoplasm. It carries out the reaction (S)-2,3,4,5-tetrahydrodipicolinate + NAD(+) + H2O = (2S,4S)-4-hydroxy-2,3,4,5-tetrahydrodipicolinate + NADH + H(+). The enzyme catalyses (S)-2,3,4,5-tetrahydrodipicolinate + NADP(+) + H2O = (2S,4S)-4-hydroxy-2,3,4,5-tetrahydrodipicolinate + NADPH + H(+). Its pathway is amino-acid biosynthesis; L-lysine biosynthesis via DAP pathway; (S)-tetrahydrodipicolinate from L-aspartate: step 4/4. Its function is as follows. Catalyzes the conversion of 4-hydroxy-tetrahydrodipicolinate (HTPA) to tetrahydrodipicolinate. The polypeptide is 4-hydroxy-tetrahydrodipicolinate reductase (Shewanella amazonensis (strain ATCC BAA-1098 / SB2B)).